A 210-amino-acid polypeptide reads, in one-letter code: Large ribosomal subunit protein uL4 (210 aa).

Over residues 41–52 the composition is skewed to polar residues; that stretch reads MNNARQGTASSK. The tract at residues 41 to 80 is disordered; sequence MNNARQGTASSKTRSEVRGGGRKPWRQKGTGRARAGSSRS. A compositionally biased stretch (basic residues) spans 60–71; it reads GGRKPWRQKGTG.

This sequence belongs to the universal ribosomal protein uL4 family. In terms of assembly, part of the 50S ribosomal subunit.

Functionally, one of the primary rRNA binding proteins, this protein initially binds near the 5'-end of the 23S rRNA. It is important during the early stages of 50S assembly. It makes multiple contacts with different domains of the 23S rRNA in the assembled 50S subunit and ribosome. Forms part of the polypeptide exit tunnel. This Acaryochloris marina (strain MBIC 11017) protein is Large ribosomal subunit protein uL4.